The following is a 226-amino-acid chain: Gap junction beta-2 protein (226 aa).

The Cytoplasmic segment spans residues methionine 1–isoleucine 20. A helical transmembrane segment spans residues glycine 21–alanine 40. Topologically, residues lysine 41 to arginine 75 are extracellular. 3 disulfides stabilise this stretch: cysteine 53-cysteine 180, cysteine 60-cysteine 174, and cysteine 64-cysteine 169. A helical transmembrane segment spans residues leucine 76 to tyrosine 98. The Cytoplasmic portion of the chain corresponds to arginine 99–serine 131. The helical transmembrane segment at leucine 132–phenylalanine 154 threads the bilayer. Over tyrosine 155–threonine 192 the chain is Extracellular. Residues valine 193–isoleucine 215 traverse the membrane as a helical segment. The Cytoplasmic portion of the chain corresponds to arginine 216–valine 226.

Belongs to the connexin family. In terms of assembly, a connexon is composed of a hexamer of connexins. Interacts with CNST.

The protein resides in the cell membrane. The protein localises to the cell junction. It localises to the gap junction. Functionally, one gap junction consists of a cluster of closely packed pairs of transmembrane channels, the connexons, through which materials of low MW diffuse from one cell to a neighboring cell. This is Gap junction beta-2 protein (GJB2) from Bos taurus (Bovine).